A 317-amino-acid chain; its full sequence is MLNEFIYPDKIFWEEKTDTYGRLVVEPLERGFGTTVGNSLRRVLLSSISGTAITAVKIYGIYHEFSAIEGVQEDAIELIANLKKIKFLMKGDSDVEILYLQKKGEGEVKASDIKTPPNVEILNPDQYIATITDPNKELNIEIRVERGRGYVPVEEMEAIGEVGWILVDADFSPVKKVGFRVDNVRVGKKSTYERLTLEIFTNGIKTPDQCMQEAIEILKKHYELLENIFTEKPTVPQKVAVDELAEKLSLSIEELDISQRALNSLKRIGITTIGDLVRMTEDELKSTKNIGRKALAEIKEALHKLGLELGMNIETQR.

Residues 1-229 (MLNEFIYPDK…KHYELLENIF (229 aa)) form an alpha N-terminal domain (alpha-NTD) region. Residues 245–317 (AEKLSLSIEE…ELGMNIETQR (73 aa)) are alpha C-terminal domain (alpha-CTD).

The protein belongs to the RNA polymerase alpha chain family. In terms of assembly, homodimer. The RNAP catalytic core consists of 2 alpha, 1 beta, 1 beta' and 1 omega subunit. When a sigma factor is associated with the core the holoenzyme is formed, which can initiate transcription.

It carries out the reaction RNA(n) + a ribonucleoside 5'-triphosphate = RNA(n+1) + diphosphate. Functionally, DNA-dependent RNA polymerase catalyzes the transcription of DNA into RNA using the four ribonucleoside triphosphates as substrates. The sequence is that of DNA-directed RNA polymerase subunit alpha from Aquifex aeolicus (strain VF5).